A 120-amino-acid chain; its full sequence is NAD(P)H-quinone oxidoreductase subunit 3 (120 aa).

3 helical membrane passes run 2–22 (FVLS…LVPI), 64–84 (MFAL…PWAV), and 89–109 (LGLL…IALV).

It belongs to the complex I subunit 3 family. NDH-1 can be composed of about 15 different subunits; different subcomplexes with different compositions have been identified which probably have different functions.

The protein resides in the cellular thylakoid membrane. The catalysed reaction is a plastoquinone + NADH + (n+1) H(+)(in) = a plastoquinol + NAD(+) + n H(+)(out). The enzyme catalyses a plastoquinone + NADPH + (n+1) H(+)(in) = a plastoquinol + NADP(+) + n H(+)(out). NDH-1 shuttles electrons from an unknown electron donor, via FMN and iron-sulfur (Fe-S) centers, to quinones in the respiratory and/or the photosynthetic chain. The immediate electron acceptor for the enzyme in this species is believed to be plastoquinone. Couples the redox reaction to proton translocation, and thus conserves the redox energy in a proton gradient. Cyanobacterial NDH-1 also plays a role in inorganic carbon-concentration. The chain is NAD(P)H-quinone oxidoreductase subunit 3 from Picosynechococcus sp. (strain ATCC 27264 / PCC 7002 / PR-6) (Agmenellum quadruplicatum).